The primary structure comprises 582 residues: Fructose-1,6-bisphosphatase class 3 (582 aa).

Belongs to the FBPase class 3 family. Requires Mn(2+) as cofactor.

It carries out the reaction beta-D-fructose 1,6-bisphosphate + H2O = beta-D-fructose 6-phosphate + phosphate. Its pathway is carbohydrate biosynthesis; gluconeogenesis. This is Fructose-1,6-bisphosphatase class 3 from Saccharophagus degradans (strain 2-40 / ATCC 43961 / DSM 17024).